The primary structure comprises 364 residues: Variable large protein 21 (364 aa).

The signal sequence occupies residues 1–26 (MRKRISAIINKLNISIMMMIVVLMIG). C27 carries the N-palmitoyl cysteine lipid modification. C27 carries the S-diacylglycerol cysteine lipid modification.

The protein belongs to the variable large protein (Vlp) family. Alpha subfamily.

It is found in the cell outer membrane. Its function is as follows. The Vlp and Vsp proteins are antigenically distinct proteins, only one vlp or vsp gene is transcriptionally active at any one time. Switching between these genes is a mechanism of host immune response evasion. This chain is Variable large protein 21, found in Borrelia hermsii.